The primary structure comprises 137 residues: Large-conductance mechanosensitive channel (137 aa).

2 helical membrane-spanning segments follow: residues 10–30 and 76–96; these read FAMR…AAFG and GVFI…FMAI.

Belongs to the MscL family. Homopentamer.

It localises to the cell inner membrane. Its function is as follows. Channel that opens in response to stretch forces in the membrane lipid bilayer. May participate in the regulation of osmotic pressure changes within the cell. The polypeptide is Large-conductance mechanosensitive channel (Enterobacter sp. (strain 638)).